We begin with the raw amino-acid sequence, 693 residues long: Golgin subfamily A member 6D (693 aa).

The stretch at 14–611 forms a coiled coil; the sequence is LEESRQNKLA…KLLELQELVL (598 aa). Disordered regions lie at residues 20–70, 497–547, and 662–693; these read NKLA…GDSQ, LPGE…GTEQ, and VEPA…MQDT. Over residues 537–547 the composition is skewed to basic and acidic residues; it reads LPKEKADGTEQ. A compositionally biased stretch (polar residues) spans 674–693; that stretch reads PHNNPTVQQIVQLSPVMQDT.

It belongs to the GOLGA6 family.

The protein is Golgin subfamily A member 6D (GOLGA6D) of Homo sapiens (Human).